A 363-amino-acid polypeptide reads, in one-letter code: tRNA-specific 2-thiouridylase MnmA (363 aa).

ATP-binding positions include 8 to 15 (AMSGGVDS) and Leu-34. Cys-103 acts as the Nucleophile in catalysis. A disulfide bridge links Cys-103 with Cys-195. Gly-127 contributes to the ATP binding site. The tract at residues 145–147 (KDQ) is interaction with tRNA. The active-site Cysteine persulfide intermediate is Cys-195.

The protein belongs to the MnmA/TRMU family.

It is found in the cytoplasm. The enzyme catalyses S-sulfanyl-L-cysteinyl-[protein] + uridine(34) in tRNA + AH2 + ATP = 2-thiouridine(34) in tRNA + L-cysteinyl-[protein] + A + AMP + diphosphate + H(+). Functionally, catalyzes the 2-thiolation of uridine at the wobble position (U34) of tRNA, leading to the formation of s(2)U34. In Thermobifida fusca (strain YX), this protein is tRNA-specific 2-thiouridylase MnmA.